A 433-amino-acid polypeptide reads, in one-letter code: Tubulin epsilon and delta complex protein 2 (433 aa).

Disordered regions lie at residues 45 to 69, 95 to 169, and 326 to 345; these read TGTR…ACTP, TKAG…VGMG, and QPPR…SCGG. Polar residues predominate over residues 107–120; sequence KSRSIVTSSGTTAS. The residue at position 159 (Ser-159) is a Phosphoserine. Over residues 327–339 the composition is skewed to pro residues; that stretch reads PPRPCPVGRPPGA.

As to quaternary structure, interacts with TEDC1. Found in a complex with TEDC1, TEDC2, TUBE1 and TUBD1.

It is found in the cell projection. Its subcellular location is the cilium. The protein localises to the cytoplasm. The protein resides in the cytoskeleton. It localises to the microtubule organizing center. It is found in the centrosome. Its subcellular location is the centriole. Acts as a positive regulator of ciliary hedgehog signaling. Required for centriole stability. In Homo sapiens (Human), this protein is Tubulin epsilon and delta complex protein 2.